The sequence spans 681 residues: Pumilio domain-containing protein C6G9.14 (681 aa).

Disordered regions lie at residues 180–210 (RPGLSSYTPGPSTSRRSISSSSNLGGNPGLI) and 273–322 (ASTA…NVPS). 2 stretches are compositionally biased toward low complexity: residues 187–210 (TPGPSTSRRSISSSSNLGGNPGLI) and 273–286 (ASTASTGSTDSSGS). The PUM-HD domain maps to 319–659 (NVPSLISDDP…RILSKLERRH (341 aa)). 8 Pumilio repeats span residues 342–378 (SLQNSNILSFCKDQHGCRYLQRLLEKKNQSHIDAVFA), 379–414 (ETHPYLAVLMVDAFGNYLCQKLFEHASEAQRSTFIQ), 415–451 (IIAPKLVPISFNMHGTRALQKIIDLVSSPDQISCIVN), 452–487 (ALRPNVVLLTKDLNGNHVIQKCLNKFSQEDCQFIFD), 488–523 (AICEDPLDVSTHRHGCCVVQRCFDHASPAQIEQLVE), 524–559 (HIVPHALTLVQDAFGNYVLQYVLELNNPNHTEAIIS), 560–595 (YFLYKVRALSTQKFSSNVMEKCIFFAPAAIKEKLIS), and 596–633 (ELMDEKHLPKLLRDSFANYVIQTALDNASVKQRAELVE). Over residues 656–666 (ERRHPSSKEKP) the composition is skewed to basic and acidic residues. Positions 656-681 (ERRHPSSKEKPIVYSNSERVNTSSSA) are disordered. The segment covering 669–681 (YSNSERVNTSSSA) has biased composition (polar residues).

The protein is Pumilio domain-containing protein C6G9.14 of Schizosaccharomyces pombe (strain 972 / ATCC 24843) (Fission yeast).